Here is a 363-residue protein sequence, read N- to C-terminus: tRNA dimethylallyltransferase (363 aa).

65–72 (GPTASGKS) is an ATP binding site. 67–72 (TASGKS) is a binding site for substrate. Interaction with substrate tRNA stretches follow at residues 90–93 (DSMQ) and 214–218 (QRLIR).

It belongs to the IPP transferase family. As to quaternary structure, monomer. It depends on Mg(2+) as a cofactor.

It carries out the reaction adenosine(37) in tRNA + dimethylallyl diphosphate = N(6)-dimethylallyladenosine(37) in tRNA + diphosphate. Functionally, catalyzes the transfer of a dimethylallyl group onto the adenine at position 37 in tRNAs that read codons beginning with uridine, leading to the formation of N6-(dimethylallyl)adenosine (i(6)A). The polypeptide is tRNA dimethylallyltransferase (Rickettsia massiliae (strain Mtu5)).